The following is a 247-amino-acid chain: 3-oxoacyl-[acyl-carrier-protein] reductase MabA (247 aa).

NADP(+) is bound by residues 25–27 (RGI), R47, 61–62 (DV), G90, Y153, K157, I186, and R197. The active-site Proton acceptor is Y153.

Belongs to the short-chain dehydrogenases/reductases (SDR) family. As to quaternary structure, homotetramer.

It is found in the secreted. It localises to the cell wall. It catalyses the reaction a (3R)-hydroxyacyl-[ACP] + NADP(+) = a 3-oxoacyl-[ACP] + NADPH + H(+). It participates in lipid metabolism; mycolic acid biosynthesis. Part of the mycobacterial fatty acid elongation system FAS-II, which is involved in mycolic acid biosynthesis. Catalyzes the NADPH-dependent reduction of beta-ketoacyl derivatives, the second step of the FAS-II elongation cycle. This Mycobacterium bovis (strain ATCC BAA-935 / AF2122/97) protein is 3-oxoacyl-[acyl-carrier-protein] reductase MabA.